Reading from the N-terminus, the 320-residue chain is Sensor histidine kinase YbdK (320 aa).

The helical transmembrane segment at 1 to 21 (MLLFTAVISVPMLLLAVSVLM) threads the bilayer. Topologically, residues 22–41 (SVIYDSMFKPMNHGMPFHRS) are extracellular. Residues 42–62 (FAYPAMIVVFLISLLLLAFLF) form a helical membrane-spanning segment. Over 63–320 (SKSIHSLLHK…NGTGFLFSKE (258 aa)) the chain is Cytoplasmic. Residues 67–120 (HSLLHKINLLNQTIRHLASDQRVPDKIEVKRADEIGELIKSVNLLIERTTYREL) enclose the HAMP domain. In terms of domain architecture, Histidine kinase spans 135-320 (KLRHDINTPL…NGTGFLFSKE (186 aa)). Residue H138 is modified to Phosphohistidine; by autocatalysis.

It localises to the cell membrane. It carries out the reaction ATP + protein L-histidine = ADP + protein N-phospho-L-histidine.. Functionally, member of the two-component regulatory system YbdK/YbdJ. Probably activates YbdJ by phosphorylation. The protein is Sensor histidine kinase YbdK (ybdK) of Bacillus subtilis (strain 168).